We begin with the raw amino-acid sequence, 582 residues long: Frizzled-10 (582 aa).

Positions 1-21 (MQHPGPRLWLVLQVMIGSCTA) are cleaved as a signal peptide. Topologically, residues 22–226 (ISSMDLERPG…DVYWSRDDKR (205 aa)) are extracellular. Residues 30-151 (PGDGKCQPVE…NDPNYLCMEA (122 aa)) form the FZ domain. 5 cysteine pairs are disulfide-bonded: Cys35/Cys96, Cys43/Cys89, Cys80/Cys118, Cys107/Cys148, and Cys111/Cys135. The N-linked (GlcNAc...) asparagine glycan is linked to Asn49. A disordered region spans residues 153 to 189 (NNGSDEPSRGSGMFPPLFRPQRPHSAQEHPLKDGGPG). N-linked (GlcNAc...) asparagine glycosylation occurs at Asn154. A helical transmembrane segment spans residues 227-247 (FAVVWLAIWSVLCFFSSAFTV). The Cytoplasmic segment spans residues 248–263 (LTFLIDPSRFRYPERP). Residues 264–284 (IIFLSMCYCVYSVGYIIRLFA) traverse the membrane as a helical segment. Residues 285–312 (GAESIACDRDSGQLYVIQEGLESTGCTL) are Extracellular-facing. The helical transmembrane segment at 313-333 (VFLVLYYFGMASSLWWVVLTL) threads the bilayer. Residues 334–352 (TWFLAAGKKWGHEAIEANS) lie on the Cytoplasmic side of the membrane. A helical membrane pass occupies residues 353-373 (SYFHLAAWAIPAVKTILILVM). The Extracellular segment spans residues 374–394 (RRVAGDELTGVCYVGSMDVNA). A helical transmembrane segment spans residues 395-415 (LTGFVLVPLACYLVIGTSFIL). Over 416–444 (SGFVALFHIRRVMKTGGENTDKLEKLMVR) the chain is Cytoplasmic. A helical membrane pass occupies residues 445-465 (IGVFSLLYTVPATCVIACYFY). At 466 to 503 (ERLNMDYWKMLATQHKCKMNNQTKTPDCLMTTSIPAVE) the chain is on the extracellular side. Residue Asn486 is glycosylated (N-linked (GlcNAc...) asparagine). A helical transmembrane segment spans residues 504 to 524 (VFMVKVSMLLVVGITSGVWVW). The Cytoplasmic portion of the chain corresponds to 525 to 582 (TSKTLQSWQHVCSRGLKRKSRRKPASVVTSAGIYKKAQHPQKPHLGKYELPAQPSACV). Residues 527–532 (KTLQSW) carry the Lys-Thr-X-X-X-Trp motif, mediates interaction with the PDZ domain of Dvl family members motif. Residues 561-582 (AQHPQKPHLGKYELPAQPSACV) form a disordered region. Residues 580–582 (ACV) carry the PDZ-binding motif.

The protein belongs to the G-protein coupled receptor Fz/Smo family. Interacts with MYOC. Interacts with WNT7B. In terms of processing, ubiquitinated by ZNRF3, leading to its degradation by the proteasome.

It localises to the cell membrane. Its function is as follows. Receptor for Wnt proteins. Functions in the canonical Wnt/beta-catenin signaling pathway. The canonical Wnt/beta-catenin signaling pathway leads to the activation of disheveled proteins, inhibition of GSK-3 kinase, nuclear accumulation of beta-catenin and activation of Wnt target genes. A second signaling pathway involving PKC and calcium fluxes has been seen for some family members, but it is not yet clear if it represents a distinct pathway or if it can be integrated in the canonical pathway, as PKC seems to be required for Wnt-mediated inactivation of GSK-3 kinase. Both pathways seem to involve interactions with G-proteins. May be involved in transduction and intercellular transmission of polarity information during tissue morphogenesis and/or in differentiated tissues. The chain is Frizzled-10 (Fzd10) from Mus musculus (Mouse).